The primary structure comprises 403 residues: Riboflavin biosynthesis protein RibBA (403 aa).

A DHBP synthase region spans residues 1–204; sequence MKNKVFASIG…IGELVNYRRR (204 aa). D-ribulose 5-phosphate contacts are provided by residues 30-31, Asp-35, 143-147, and Glu-167; these read RE and RTGHT. Mg(2+) is bound at residue Glu-31. His-146 is a binding site for Mg(2+). The segment at 205–403 is GTP cyclohydrolase II; it reads TEKFISEIVN…EKMGHMLKKV (199 aa). Position 255–259 (255–259) interacts with GTP; that stretch reads RVHSS. Zn(2+)-binding residues include Cys-260, Cys-271, and Cys-273. Residues Gln-276, 298–300, and Thr-320 contribute to the GTP site; that span reads EGR. Asp-332 serves as the catalytic Proton acceptor; for GTP cyclohydrolase activity. The Nucleophile; for GTP cyclohydrolase activity role is filled by Arg-334. GTP contacts are provided by Thr-355 and Lys-360.

The protein in the N-terminal section; belongs to the DHBP synthase family. This sequence in the C-terminal section; belongs to the GTP cyclohydrolase II family. The cofactor is Mg(2+). Mn(2+) is required as a cofactor. Zn(2+) serves as cofactor.

The enzyme catalyses D-ribulose 5-phosphate = (2S)-2-hydroxy-3-oxobutyl phosphate + formate + H(+). It catalyses the reaction GTP + 4 H2O = 2,5-diamino-6-hydroxy-4-(5-phosphoribosylamino)-pyrimidine + formate + 2 phosphate + 3 H(+). The protein operates within cofactor biosynthesis; riboflavin biosynthesis; 2-hydroxy-3-oxobutyl phosphate from D-ribulose 5-phosphate: step 1/1. It functions in the pathway cofactor biosynthesis; riboflavin biosynthesis; 5-amino-6-(D-ribitylamino)uracil from GTP: step 1/4. In terms of biological role, catalyzes the conversion of D-ribulose 5-phosphate to formate and 3,4-dihydroxy-2-butanone 4-phosphate. Functionally, catalyzes the conversion of GTP to 2,5-diamino-6-ribosylamino-4(3H)-pyrimidinone 5'-phosphate (DARP), formate and pyrophosphate. In Endomicrobium trichonymphae, this protein is Riboflavin biosynthesis protein RibBA.